A 341-amino-acid chain; its full sequence is Phosphoribosylformylglycinamidine cyclo-ligase (341 aa).

This sequence belongs to the AIR synthase family.

The protein resides in the cytoplasm. The catalysed reaction is 2-formamido-N(1)-(5-O-phospho-beta-D-ribosyl)acetamidine + ATP = 5-amino-1-(5-phospho-beta-D-ribosyl)imidazole + ADP + phosphate + H(+). The protein operates within purine metabolism; IMP biosynthesis via de novo pathway; 5-amino-1-(5-phospho-D-ribosyl)imidazole from N(2)-formyl-N(1)-(5-phospho-D-ribosyl)glycinamide: step 2/2. The sequence is that of Phosphoribosylformylglycinamidine cyclo-ligase from Alkaliphilus oremlandii (strain OhILAs) (Clostridium oremlandii (strain OhILAs)).